A 248-amino-acid polypeptide reads, in one-letter code: MSFPYFISPEQAMRERSELARKGIARAKSVVALAYAGGVLFVAENPSRSLQKISELYDRVGFAAAGKFNEFDNLRRGGIQFADTRGYAYDRRDVTGRQLANVYAQTLGTIFTEQAKPYEVELCVAEVAHYGETKPPELYRITYDGSIADEPHFVVMGGTTEPIANALKESYAENASLTDALRIAVAALRAGSADTSGGDQPTLGVASLEVAVLDANRPRRAFRRITGSALQALLVDQESPQSDGESSG.

The residue at position 2 (serine 2) is an N-acetylserine; partial.

Belongs to the peptidase T1A family. The 20S proteasome core is composed of 14 alpha and 14 beta subunits that assemble into four stacked heptameric rings, resulting in a barrel-shaped structure. The two inner rings, each composed of seven catalytic beta subunits, are sandwiched by two outer rings, each composed of seven alpha subunits. The catalytic chamber with the active sites is on the inside of the barrel. Has a gated structure, the ends of the cylinder being occluded by the N-termini of the alpha-subunits. Is capped by the proteasome-associated ATPase, ARC.

It is found in the cytoplasm. It participates in protein degradation; proteasomal Pup-dependent pathway. Its activity is regulated as follows. The formation of the proteasomal ATPase ARC-20S proteasome complex, likely via the docking of the C-termini of ARC into the intersubunit pockets in the alpha-rings, may trigger opening of the gate for substrate entry. Interconversion between the open-gate and close-gate conformations leads to a dynamic regulation of the 20S proteasome proteolysis activity. Component of the proteasome core, a large protease complex with broad specificity involved in protein degradation. In Mycobacterium tuberculosis (strain CDC 1551 / Oshkosh), this protein is Proteasome subunit alpha.